Consider the following 89-residue polypeptide: Phosphocarrier protein HPr (89 aa).

The HPr domain occupies 1-88 (MLEHELTVTN…ELFENRFNED (88 aa)). Residue histidine 15 is the Pros-phosphohistidine intermediate of the active site. At serine 46 the chain carries Phosphoserine; by HPrK/P.

The protein belongs to the HPr family.

Its subcellular location is the cytoplasm. Its activity is regulated as follows. Phosphorylation on Ser-46 inhibits the phosphoryl transfer from enzyme I to HPr. General (non sugar-specific) component of the phosphoenolpyruvate-dependent sugar phosphotransferase system (sugar PTS). This major carbohydrate active-transport system catalyzes the phosphorylation of incoming sugar substrates concomitantly with their translocation across the cell membrane. The phosphoryl group from phosphoenolpyruvate (PEP) is transferred to the phosphoryl carrier protein HPr by enzyme I. Phospho-HPr then transfers it to the PTS EIIA domain. This is Phosphocarrier protein HPr (ptsH) from Xylella fastidiosa (strain Temecula1 / ATCC 700964).